The primary structure comprises 130 residues: Small ribosomal subunit protein uS9 (130 aa).

It belongs to the universal ribosomal protein uS9 family.

The chain is Small ribosomal subunit protein uS9 from Pseudomonas fluorescens (strain SBW25).